The sequence spans 582 residues: 2-succinyl-5-enolpyruvyl-6-hydroxy-3-cyclohexene-1-carboxylate synthase (582 aa).

Belongs to the TPP enzyme family. MenD subfamily. Homodimer. Mg(2+) serves as cofactor. Mn(2+) is required as a cofactor. Requires thiamine diphosphate as cofactor.

It carries out the reaction isochorismate + 2-oxoglutarate + H(+) = 5-enolpyruvoyl-6-hydroxy-2-succinyl-cyclohex-3-ene-1-carboxylate + CO2. Its pathway is quinol/quinone metabolism; 1,4-dihydroxy-2-naphthoate biosynthesis; 1,4-dihydroxy-2-naphthoate from chorismate: step 2/7. It functions in the pathway quinol/quinone metabolism; menaquinone biosynthesis. In terms of biological role, catalyzes the thiamine diphosphate-dependent decarboxylation of 2-oxoglutarate and the subsequent addition of the resulting succinic semialdehyde-thiamine pyrophosphate anion to isochorismate to yield 2-succinyl-5-enolpyruvyl-6-hydroxy-3-cyclohexene-1-carboxylate (SEPHCHC). The chain is 2-succinyl-5-enolpyruvyl-6-hydroxy-3-cyclohexene-1-carboxylate synthase from Chlorobaculum tepidum (strain ATCC 49652 / DSM 12025 / NBRC 103806 / TLS) (Chlorobium tepidum).